A 198-amino-acid chain; its full sequence is UPF0215 protein NEQ431 (198 aa).

Residues 179-198 (TKGDSSKPRAGGDSNPGPAG) form a disordered region.

Belongs to the UPF0215 family.

This chain is UPF0215 protein NEQ431, found in Nanoarchaeum equitans (strain Kin4-M).